Reading from the N-terminus, the 396-residue chain is S-adenosylmethionine synthase (396 aa).

Residue H16 coordinates ATP. D18 contributes to the Mg(2+) binding site. Residue E44 coordinates K(+). Positions 57 and 100 each coordinate L-methionine. The tract at residues 100–110 (QSQDIARGVDN) is flexible loop. ATP-binding positions include 162–164 (DGK), D237, 243–244 (RK), A260, and K264. D237 contacts L-methionine. K268 contributes to the L-methionine binding site.

It belongs to the AdoMet synthase family. In terms of assembly, homotetramer; dimer of dimers. Mg(2+) serves as cofactor. K(+) is required as a cofactor.

It localises to the cytoplasm. The catalysed reaction is L-methionine + ATP + H2O = S-adenosyl-L-methionine + phosphate + diphosphate. It participates in amino-acid biosynthesis; S-adenosyl-L-methionine biosynthesis; S-adenosyl-L-methionine from L-methionine: step 1/1. Functionally, catalyzes the formation of S-adenosylmethionine (AdoMet) from methionine and ATP. The overall synthetic reaction is composed of two sequential steps, AdoMet formation and the subsequent tripolyphosphate hydrolysis which occurs prior to release of AdoMet from the enzyme. The sequence is that of S-adenosylmethionine synthase from Myxococcus xanthus.